The primary structure comprises 273 residues: Ribosomal RNA small subunit methyltransferase A (273 aa).

Asn18, Leu20, Gly45, Glu66, Asp91, and Asn113 together coordinate S-adenosyl-L-methionine.

This sequence belongs to the class I-like SAM-binding methyltransferase superfamily. rRNA adenine N(6)-methyltransferase family. RsmA subfamily.

It localises to the cytoplasm. It carries out the reaction adenosine(1518)/adenosine(1519) in 16S rRNA + 4 S-adenosyl-L-methionine = N(6)-dimethyladenosine(1518)/N(6)-dimethyladenosine(1519) in 16S rRNA + 4 S-adenosyl-L-homocysteine + 4 H(+). Specifically dimethylates two adjacent adenosines (A1518 and A1519) in the loop of a conserved hairpin near the 3'-end of 16S rRNA in the 30S particle. May play a critical role in biogenesis of 30S subunits. This is Ribosomal RNA small subunit methyltransferase A from Salmonella choleraesuis (strain SC-B67).